Here is a 217-residue protein sequence, read N- to C-terminus: ATP phosphoribosyltransferase (217 aa).

It belongs to the ATP phosphoribosyltransferase family. Short subfamily. As to quaternary structure, heteromultimer composed of HisG and HisZ subunits.

The protein resides in the cytoplasm. The enzyme catalyses 1-(5-phospho-beta-D-ribosyl)-ATP + diphosphate = 5-phospho-alpha-D-ribose 1-diphosphate + ATP. It participates in amino-acid biosynthesis; L-histidine biosynthesis; L-histidine from 5-phospho-alpha-D-ribose 1-diphosphate: step 1/9. Its function is as follows. Catalyzes the condensation of ATP and 5-phosphoribose 1-diphosphate to form N'-(5'-phosphoribosyl)-ATP (PR-ATP). Has a crucial role in the pathway because the rate of histidine biosynthesis seems to be controlled primarily by regulation of HisG enzymatic activity. This Syntrophomonas wolfei subsp. wolfei (strain DSM 2245B / Goettingen) protein is ATP phosphoribosyltransferase.